Here is a 472-residue protein sequence, read N- to C-terminus: 2-oxoisovalerate dehydrogenase subunit alpha 2, mitochondrial (472 aa).

185-187 (QYR) is a binding site for thiamine diphosphate. Residues Ser-234, Thr-239, and Gln-240 each coordinate K(+).

Belongs to the BCKDHA family. Heterotetramer of alpha and beta chains. It depends on thiamine diphosphate as a cofactor.

The protein localises to the mitochondrion matrix. The catalysed reaction is N(6)-[(R)-lipoyl]-L-lysyl-[protein] + 3-methyl-2-oxobutanoate + H(+) = N(6)-[(R)-S(8)-2-methylpropanoyldihydrolipoyl]-L-lysyl-[protein] + CO2. The branched-chain alpha-keto dehydrogenase complex catalyzes the overall conversion of alpha-keto acids to acyl-CoA and CO(2). It contains multiple copies of three enzymatic components: branched-chain alpha-keto acid decarboxylase (E1), lipoamide acyltransferase (E2) and lipoamide dehydrogenase (E3). The protein is 2-oxoisovalerate dehydrogenase subunit alpha 2, mitochondrial of Arabidopsis thaliana (Mouse-ear cress).